Consider the following 159-residue polypeptide: Nucleotide-binding protein Psyr_4087 (159 aa).

This sequence belongs to the YajQ family.

Functionally, nucleotide-binding protein. This Pseudomonas syringae pv. syringae (strain B728a) protein is Nucleotide-binding protein Psyr_4087.